The chain runs to 499 residues: Chitinase B (499 aa).

An N-terminal signal peptide occupies residues 1 to 41; it reads MSTRKAVIGYYFIPTNQINNYTETDTSVVPFPVSNITPAKA. Residues 42–425 form the GH18 domain; the sequence is KQLTHINFSF…AALDRYFNAA (384 aa). Chitin-binding positions include 68–69 and 95–98; these read DA and GGWY. The Proton donor role is filled by glutamate 144. Residues tyrosine 145, 212 to 215, and tryptophan 403 each bind chitin; that span reads MTYD. The 61-residue stretch at 438–498 folds into the Chitin-binding type-3 domain; sequence LRYTGVGPGN…DSAWLKVGRL (61 aa).

Belongs to the glycosyl hydrolase 18 family. Chitinase class II subfamily.

The catalysed reaction is Random endo-hydrolysis of N-acetyl-beta-D-glucosaminide (1-&gt;4)-beta-linkages in chitin and chitodextrins.. The sequence is that of Chitinase B (chiB) from Serratia marcescens.